We begin with the raw amino-acid sequence, 305 residues long: Coiled-coil domain-containing protein 50 (305 aa).

Position 2 is an N-acetylalanine (A2). S5 carries the post-translational modification Phosphoserine. A coiled-coil region spans residues 86-130; the sequence is EIAQEIQEKLTIEAERRRIQEKKDEDIARLLQEKELQEEKRRKKH. Disordered stretches follow at residues 122–142 and 218–305; these read QEEK…VFGD and KKAK…HNKQ. 2 stretches are compositionally biased toward basic and acidic residues: residues 218–239 and 247–263; these read KKAK…ECKL and KSKE…DRPS. Over residues 279–305 the composition is skewed to polar residues; sequence THFTNQHSTTWHLPKSESSQKGFHNKQ.

As to quaternary structure, interacts with RNF126. In terms of processing, phosphorylated on tyrosine residues. In terms of tissue distribution, widely expressed.

Its subcellular location is the cytoplasm. Its function is as follows. Involved in EGFR signaling. This is Coiled-coil domain-containing protein 50 (Ccdc50) from Mus musculus (Mouse).